The sequence spans 728 residues: Cytosolic endo-beta-N-acetylglucosaminidase (728 aa).

Positions 287–381 (QNRVFFDACD…NFLLNEDKFW (95 aa)) constitute a BRCT domain.

This sequence belongs to the glycosyl hydrolase 85 family.

It localises to the cytoplasm. The protein localises to the cytosol. The catalysed reaction is an N(4)-(oligosaccharide-(1-&gt;3)-[oligosaccharide-(1-&gt;6)]-beta-D-Man-(1-&gt;4)-beta-D-GlcNAc-(1-&gt;4)-alpha-D-GlcNAc)-L-asparaginyl-[protein] + H2O = an oligosaccharide-(1-&gt;3)-[oligosaccharide-(1-&gt;6)]-beta-D-Man-(1-&gt;4)-D-GlcNAc + N(4)-(N-acetyl-beta-D-glucosaminyl)-L-asparaginyl-[protein]. In terms of biological role, endoglycosidase that releases N-glycans from glycoproteins by cleaving the beta-1,4-glycosidic bond in the N,N'-diacetylchitobiose core. Involved in the processing of free oligosaccharides in the cytosol. This is Cytosolic endo-beta-N-acetylglucosaminidase (ENGASE) from Gallus gallus (Chicken).